We begin with the raw amino-acid sequence, 389 residues long: Nicotinate phosphoribosyltransferase (389 aa).

His211 is modified (phosphohistidine; by autocatalysis).

This sequence belongs to the NAPRTase family. Transiently phosphorylated on a His residue during the reaction cycle. Phosphorylation strongly increases the affinity for substrates and increases the rate of nicotinate D-ribonucleotide production. Dephosphorylation regenerates the low-affinity form of the enzyme, leading to product release.

It catalyses the reaction nicotinate + 5-phospho-alpha-D-ribose 1-diphosphate + ATP + H2O = nicotinate beta-D-ribonucleotide + ADP + phosphate + diphosphate. Its pathway is cofactor biosynthesis; NAD(+) biosynthesis; nicotinate D-ribonucleotide from nicotinate: step 1/1. Its function is as follows. Catalyzes the synthesis of beta-nicotinate D-ribonucleotide from nicotinate and 5-phospho-D-ribose 1-phosphate at the expense of ATP. The chain is Nicotinate phosphoribosyltransferase from Desulforapulum autotrophicum (strain ATCC 43914 / DSM 3382 / VKM B-1955 / HRM2) (Desulfobacterium autotrophicum).